The chain runs to 470 residues: Uronate isomerase (470 aa).

The protein belongs to the metallo-dependent hydrolases superfamily. Uronate isomerase family.

The enzyme catalyses D-glucuronate = D-fructuronate. It carries out the reaction aldehydo-D-galacturonate = keto-D-tagaturonate. The protein operates within carbohydrate metabolism; pentose and glucuronate interconversion. In Salmonella heidelberg (strain SL476), this protein is Uronate isomerase.